We begin with the raw amino-acid sequence, 313 residues long: Dehydrodolichyl diphosphate synthase CPT5, chloroplastic (313 aa).

The N-terminal 42 residues, 1 to 42 (MAFSFQLQQVFPFPVKFCSQPKSIKLQIFPNLTKRLPIHPLA), are a transit peptide targeting the chloroplast. Asp89 is a catalytic residue.

Belongs to the UPP synthase family. Mg(2+) is required as a cofactor. Expressed in leaf trichomes, stem trichomes and old leaves. Expressed at low levels in young leaves and flowers.

The protein resides in the plastid. Its subcellular location is the chloroplast. It catalyses the reaction n isopentenyl diphosphate + (2E,6E)-farnesyl diphosphate = a di-trans,poly-cis-polyprenyl diphosphate + n diphosphate. Its function is as follows. Catalyzes cis-prenyl chain elongation to produce the polyprenyl backbone of dolichol, a glycosyl carrier-lipid required for the biosynthesis of several classes of glycoprotein. The protein is Dehydrodolichyl diphosphate synthase CPT5, chloroplastic of Solanum lycopersicum (Tomato).